We begin with the raw amino-acid sequence, 256 residues long: MNRFLIIDGLNLVRRIHAAQPNENDVNGLPERVTSACRKLLSKHNPSHVTLVWDGDAISWRKKLYDDYKKGRKPMPEALSQALPALKQHLAERGFHSIDAIAEADDVIATLASKMVQAKGEAIIVSTDKGFTQLLSPQIQLWDHFNQQAITIEDRERQLGVDRSQFIDFLAMAGDSGNKIPGIPGIGPKSACELLKTFRTLANVYASLDKIGAKQAKKLEEGRALARLSYKLVQLQTDIPLNTRLANFRVELTAKA.

Position 105 (aspartate 105) interacts with Mg(2+). The region spanning 164-250 (SQFIDFLAMA…LNTRLANFRV (87 aa)) is the 5'-3' exonuclease domain. Methionine 172, alanine 173, proline 181, isoleucine 183, and isoleucine 186 together coordinate K(+). Residues 185 to 190 (GIGPKS) are interaction with DNA.

This sequence belongs to the Xni family. It depends on Mg(2+) as a cofactor. The cofactor is K(+).

Its function is as follows. Has flap endonuclease activity. During DNA replication, flap endonucleases cleave the 5'-overhanging flap structure that is generated by displacement synthesis when DNA polymerase encounters the 5'-end of a downstream Okazaki fragment. This chain is Flap endonuclease Xni, found in Shewanella loihica (strain ATCC BAA-1088 / PV-4).